Here is an 859-residue protein sequence, read N- to C-terminus: Bifunctional heparan sulfate N-deacetylase/N-sulfotransferase 1 (859 aa).

Residues 1–13 (MIITPYLNPRLVK) lie on the Cytoplasmic side of the membrane. The helical; Signal-anchor for type II membrane protein transmembrane segment at 14–34 (PLKWLAIIILLYFLYFSLFSI) threads the bilayer. Residues 34–575 (INKKPGKPRK…PRHQAILPPS (542 aa)) are heparan sulfate N-deacetylase 1. The Lumenal portion of the chain corresponds to 35 to 859 (NKKPGKPRKP…WLEEAVRIRV (825 aa)). N-linked (GlcNAc...) asparagine glycans are attached at residues Asn50, Asn74, Asn210, Asn262, Asn378, and Asn429. The segment at 576–859 (MSCSKKSLPD…WLEEAVRIRV (284 aa)) is heparan sulfate N-sulfotransferase 1. Lys593 acts as the For sulfotransferase activity in catalysis. Position 593–597 (593–597 (KTGST)) interacts with 3'-phosphoadenylyl sulfate. N-linked (GlcNAc...) asparagine glycans are attached at residues Asn608 and Asn643. Ser687 is a binding site for 3'-phosphoadenylyl sulfate. Asn715 carries N-linked (GlcNAc...) asparagine glycosylation. Cys796 and Cys805 are oxidised to a cystine. Residue 810–814 (KGRKY) participates in 3'-phosphoadenylyl sulfate binding.

It belongs to the sulfotransferase 1 family. NDST subfamily. In terms of assembly, monomer.

The protein resides in the golgi apparatus membrane. It carries out the reaction alpha-D-glucosaminyl-[heparan sulfate](n) + 3'-phosphoadenylyl sulfate = N-sulfo-alpha-D-glucosaminyl-[heparan sulfate](n) + adenosine 3',5'-bisphosphate + 2 H(+). The protein operates within glycan metabolism; heparan sulfate biosynthesis. Its pathway is glycan metabolism; heparin biosynthesis. Its function is as follows. Essential bifunctional enzyme that catalyzes both the N-deacetylation and the N-sulfation of glucosamine (GlcNAc) of the glycosaminoglycan in heparan sulfate. Modifies the GlcNAc-GlcA disaccharide repeating sugar backbone to make N-sulfated heparosan, a prerequisite substrate for later modifications in heparin biosynthesis. This is Bifunctional heparan sulfate N-deacetylase/N-sulfotransferase 1 (hst-1) from Caenorhabditis briggsae.